Reading from the N-terminus, the 638-residue chain is 1-deoxy-D-xylulose-5-phosphate synthase (638 aa).

Thiamine diphosphate is bound by residues His-79 and 120-122 (AHS). Asp-151 is a Mg(2+) binding site. Residues 152–153 (GA), Asn-180, Tyr-289, and Glu-371 contribute to the thiamine diphosphate site. Asn-180 is a binding site for Mg(2+).

It belongs to the transketolase family. DXPS subfamily. In terms of assembly, homodimer. Requires Mg(2+) as cofactor. The cofactor is thiamine diphosphate.

It carries out the reaction D-glyceraldehyde 3-phosphate + pyruvate + H(+) = 1-deoxy-D-xylulose 5-phosphate + CO2. The protein operates within metabolic intermediate biosynthesis; 1-deoxy-D-xylulose 5-phosphate biosynthesis; 1-deoxy-D-xylulose 5-phosphate from D-glyceraldehyde 3-phosphate and pyruvate: step 1/1. Functionally, catalyzes the acyloin condensation reaction between C atoms 2 and 3 of pyruvate and glyceraldehyde 3-phosphate to yield 1-deoxy-D-xylulose-5-phosphate (DXP). The sequence is that of 1-deoxy-D-xylulose-5-phosphate synthase from Rhizobium johnstonii (strain DSM 114642 / LMG 32736 / 3841) (Rhizobium leguminosarum bv. viciae).